The following is a 94-amino-acid chain: Co-chaperonin GroES (94 aa).

It belongs to the GroES chaperonin family. In terms of assembly, heptamer of 7 subunits arranged in a ring. Interacts with the chaperonin GroEL.

It is found in the cytoplasm. In terms of biological role, together with the chaperonin GroEL, plays an essential role in assisting protein folding. The GroEL-GroES system forms a nano-cage that allows encapsulation of the non-native substrate proteins and provides a physical environment optimized to promote and accelerate protein folding. GroES binds to the apical surface of the GroEL ring, thereby capping the opening of the GroEL channel. This is Co-chaperonin GroES from Bacillus pumilus (strain SAFR-032).